A 310-amino-acid polypeptide reads, in one-letter code: Ribosomal RNA small subunit methyltransferase H (310 aa).

S-adenosyl-L-methionine contacts are provided by residues Ala32–His34, Asp52, Phe79, Asp100, and Gln107.

It belongs to the methyltransferase superfamily. RsmH family.

It localises to the cytoplasm. The enzyme catalyses cytidine(1402) in 16S rRNA + S-adenosyl-L-methionine = N(4)-methylcytidine(1402) in 16S rRNA + S-adenosyl-L-homocysteine + H(+). Its function is as follows. Specifically methylates the N4 position of cytidine in position 1402 (C1402) of 16S rRNA. This is Ribosomal RNA small subunit methyltransferase H from Bacillus pumilus (strain SAFR-032).